Reading from the N-terminus, the 1372-residue chain is DNA-directed RNA polymerase subunit beta'' (1372 aa).

4 residues coordinate Zn(2+): cysteine 252, cysteine 321, cysteine 328, and cysteine 331.

It belongs to the RNA polymerase beta' chain family. RpoC2 subfamily. In terms of assembly, in plastids the minimal PEP RNA polymerase catalytic core is composed of four subunits: alpha, beta, beta', and beta''. When a (nuclear-encoded) sigma factor is associated with the core the holoenzyme is formed, which can initiate transcription. Zn(2+) is required as a cofactor.

Its subcellular location is the plastid. The protein resides in the organellar chromatophore. The catalysed reaction is RNA(n) + a ribonucleoside 5'-triphosphate = RNA(n+1) + diphosphate. Functionally, DNA-dependent RNA polymerase catalyzes the transcription of DNA into RNA using the four ribonucleoside triphosphates as substrates. This Paulinella chromatophora protein is DNA-directed RNA polymerase subunit beta''.